We begin with the raw amino-acid sequence, 495 residues long: SH2 domain-containing adapter protein E (495 aa).

Disordered regions lie at residues 51–190 (TVSE…DKGK), 203–233 (DYAD…EPYD), and 256–327 (LLDS…EYEQ). The residue at position 107 (serine 107) is a Phosphoserine. Residues 135–144 (TKSSGCSTYI) are compositionally biased toward polar residues. The segment covering 148–157 (IKVDTQEKNG) has biased composition (basic and acidic residues). Low complexity predominate over residues 162–181 (PSSSSSSSSSSSSASSSPSS). Basic and acidic residues-rich tracts occupy residues 208–224 (YDAK…RVGE) and 301–327 (PRAE…EYEQ). One can recognise an SH2 domain in the interval 395–490 (WYHGAISRAE…AEHMTLLYPV (96 aa)).

This is SH2 domain-containing adapter protein E (SHE) from Homo sapiens (Human).